Reading from the N-terminus, the 93-residue chain is Protein E7 (93 aa).

Residues 1-42 (MRGETPTLKDIVLFDIPTCETPIDLYCYEQLDSSDEDDQAKQ) are E7 terminal domain. The LXCXE motif; interaction with host RB1 and TMEM173/STING motif lies at 25 to 29 (LYCYE). Residues 53–89 (CTQCYKSVKLVVQCTEADIRNLQQMLLGTLDIVCPLC) fold into a zinc finger. The Nuclear export signal motif lies at 71–79 (IRNLQQMLL).

It belongs to the papillomaviridae E7 protein family. Homodimer. Homooligomer. Interacts with host RB1; this interaction induces dissociation of RB1-E2F1 complex thereby disrupting RB1 activity. Interacts with host EP300; this interaction represses EP300 transcriptional activity. Interacts with protein E2; this interaction inhibits E7 oncogenic activity. Interacts with host TMEM173/STING; this interaction impairs the ability of TMEM173/STING to sense cytosolic DNA and promote the production of type I interferon (IFN-alpha and IFN-beta). In terms of processing, highly phosphorylated.

The protein resides in the host cytoplasm. The protein localises to the host nucleus. Functionally, plays a role in viral genome replication by driving entry of quiescent cells into the cell cycle. Stimulation of progression from G1 to S phase allows the virus to efficiently use the cellular DNA replicating machinery to achieve viral genome replication. E7 protein has both transforming and trans-activating activities. Induces the disassembly of the E2F1 transcription factor from RB1, with subsequent transcriptional activation of E2F1-regulated S-phase genes. Interferes with host histone deacetylation mediated by HDAC1 and HDAC2, leading to transcription activation. Also plays a role in the inhibition of both antiviral and antiproliferative functions of host interferon alpha. Interaction with host TMEM173/STING impairs the ability of TMEM173/STING to sense cytosolic DNA and promote the production of type I interferon (IFN-alpha and IFN-beta). The polypeptide is Protein E7 (Human papillomavirus 42).